A 143-amino-acid polypeptide reads, in one-letter code: Large ribosomal subunit protein uL11 (143 aa).

It belongs to the universal ribosomal protein uL11 family. In terms of assembly, part of the ribosomal stalk of the 50S ribosomal subunit. Interacts with L10 and the large rRNA to form the base of the stalk. L10 forms an elongated spine to which L12 dimers bind in a sequential fashion forming a multimeric L10(L12)X complex. One or more lysine residues are methylated.

Its function is as follows. Forms part of the ribosomal stalk which helps the ribosome interact with GTP-bound translation factors. This chain is Large ribosomal subunit protein uL11, found in Pseudomonas entomophila (strain L48).